The sequence spans 375 residues: Succinyl-diaminopimelate desuccinylase (375 aa).

H66 lines the Zn(2+) pocket. The active site involves D68. D99 contributes to the Zn(2+) binding site. E133 functions as the Proton acceptor in the catalytic mechanism. Zn(2+) contacts are provided by E134, E162, and H348.

The protein belongs to the peptidase M20A family. DapE subfamily. As to quaternary structure, homodimer. Zn(2+) serves as cofactor. The cofactor is Co(2+).

It carries out the reaction N-succinyl-(2S,6S)-2,6-diaminopimelate + H2O = (2S,6S)-2,6-diaminopimelate + succinate. It participates in amino-acid biosynthesis; L-lysine biosynthesis via DAP pathway; LL-2,6-diaminopimelate from (S)-tetrahydrodipicolinate (succinylase route): step 3/3. In terms of biological role, catalyzes the hydrolysis of N-succinyl-L,L-diaminopimelic acid (SDAP), forming succinate and LL-2,6-diaminopimelate (DAP), an intermediate involved in the bacterial biosynthesis of lysine and meso-diaminopimelic acid, an essential component of bacterial cell walls. This Escherichia coli (strain SE11) protein is Succinyl-diaminopimelate desuccinylase.